A 910-amino-acid polypeptide reads, in one-letter code: MGTPRAQHPPPPQLLFLILLSCPWIQGLPLKEEEILPEPGSETPTVASEALAELLHGALLRRGPEMGYLPGSDRDPTLATPPAGQTLAVPSLPRATEPGTGPLTTAVTPNGVRGAGPTAPELLTPPPGTTAPPPPSPASPGPPLGPEGGEEETTTTIITTTTVTTTVTSPVLCNNNISEGEGYVESPDLGSPVSRTLGLLDCTYSIHVYPGYGIEIQVQTLNLSQEEELLVLAGGGSPGLAPRLLANSSMLGEGQVLRSPTNRLLLHFQSPRVPRGGGFRIHYQAYLLSCGFPPRPAHGDVSVTDLHPGGTATFHCDSGYQLQGEETLICLNGTRPSWNGETPSCMASCGGTIHNATLGRIVSPEPGGAVGPNLTCRWVIEAAEGRRLHLHFERVSLDEDNDRLMVRSGGSPLSPVIYDSDMDDVPERGLISDAQSLYVELLSETPANPLLLSLRFEAFEEDRCFAPFLAHGNVTTTDPEYRPGALATFSCLPGYALEPPGPPNAIECVDPTEPHWNDTEPACKAMCGGELSEPAGVVLSPDWPQSYSPGQDCVWGVHVQEEKRILLQVEILNVREGDMLTLFDGDGPSARVLAQLRGPQPRRRLLSSGPDLTLQFQAPPGPPNPGLGQGFVLHFKEVPRNDTCPELPPPEWGWRTASHGDLIRGTVLTYQCEPGYELLGSDILTCQWDLSWSAAPPACQKIMTCADPGEIANGHRTASDAGFPVGSHVQYRCLPGYSLEGAAMLTCYSRDTGTPKWSDRVPKCALKYEPCLNPGVPENGYQTLYKHHYQAGESLRFFCYEGFELIGEVTITCVPGHPSQWTSQPPLCKVTQTTDPSRQLEGGNLALAILLPLGLVIVLGSGVYIYYTKLQGKSLFGFSGSHSYSPITVESDFSNPLYEAGDTREYEVSI.

An N-terminal signal peptide occupies residues 1 to 27; the sequence is MGTPRAQHPPPPQLLFLILLSCPWIQG. The Extracellular segment spans residues 28 to 844; it reads LPLKEEEILP…DPSRQLEGGN (817 aa). Residues 41–48 are O-glycosylated at one site; it reads SETPTVAS. Residues 65–152 form a disordered region; that stretch reads EMGYLPGSDR…PLGPEGGEEE (88 aa). Positions 123-145 are enriched in pro residues; the sequence is LTPPPGTTAPPPPSPASPGPPLG. Cysteines 173 and 202 form a disulfide. Residues 173 to 286 enclose the CUB 1 domain; sequence CNNNISEGEG…GGFRIHYQAY (114 aa). N-linked (GlcNAc...) asparagine glycans are attached at residues Asn-176, Asn-222, and Asn-247. The region spanning 288–347 is the Sushi 1 domain; the sequence is LSCGFPPRPAHGDVSVTDLHPGGTATFHCDSGYQLQGEETLICLNGTRPSWNGETPSCMA. 6 disulfides stabilise this stretch: Cys-290–Cys-330, Cys-316–Cys-345, Cys-349–Cys-376, Cys-464–Cys-508, Cys-491–Cys-523, and Cys-527–Cys-553. Residues Asn-332, Asn-355, Asn-373, Asn-473, and Asn-517 are each glycosylated (N-linked (GlcNAc...) asparagine). One can recognise a CUB 2 domain in the interval 349–459; that stretch reads CGGTIHNATL…LLLSLRFEAF (111 aa). The Sushi 2 domain occupies 462–525; it reads DRCFAPFLAH…WNDTEPACKA (64 aa). One can recognise a CUB 3 domain in the interval 527–638; that stretch reads CGGELSEPAG…QGFVLHFKEV (112 aa). An N-linked (GlcNAc...) asparagine glycan is attached at Asn-641. Sushi domains lie at 642–701, 703–766, and 769–830; these read DTCP…ACQK, MTCA…KCAL, and EPCL…LCKV. Cystine bridges form between Cys-644/Cys-686, Cys-672/Cys-699, Cys-705/Cys-747, Cys-733/Cys-764, Cys-771/Cys-813, and Cys-799/Cys-828. A helical transmembrane segment spans residues 845 to 865; the sequence is LALAILLPLGLVIVLGSGVYI. Residues 866-910 lie on the Cytoplasmic side of the membrane; it reads YYTKLQGKSLFGFSGSHSYSPITVESDFSNPLYEAGDTREYEVSI.

This sequence belongs to the SEZ6 family. Post-translationally, O-glycosylated with core 1 or possibly core 8 glycans.

The protein resides in the cell membrane. It localises to the endoplasmic reticulum membrane. Functionally, may contribute to specialized endoplasmic reticulum functions in neurons. The chain is Seizure 6-like protein 2 (SEZ6L2) from Homo sapiens (Human).